Here is a 680-residue protein sequence, read N- to C-terminus: Probable inactive DNA (cytosine-5)-methyltransferase DRM3 (680 aa).

A disordered region spans residues 1 to 24 (MVKVEDDVEGSGINASVGDLRDAA). A UBA 1 domain is found at 45–86 (SSSSHVRSQFIGMGFSPMLVDRVLQKHGDRDSDTILEALLSQ). A disordered region spans residues 91–113 (KSGSESGSLGDLFDSDNEENSSH). The region spanning 194 to 235 (SLFGVMDKTLHLLQMGFTEEEVSSVIDKAGPEATVLELADTI) is the UBA 2 domain. The region spanning 336–663 (IRRNVRSDVA…QRVKHIMGRL (328 aa)) is the SAM-dependent MTase DRM-type domain.

This sequence belongs to the class I-like SAM-binding methyltransferase superfamily. DRM-methyltransferase family.

It is found in the nucleus. Involved in de novo DNA methylation. Involved in RNA-directed DNA methylation (RdDM). The protein is Probable inactive DNA (cytosine-5)-methyltransferase DRM3 of Oryza sativa subsp. japonica (Rice).